Reading from the N-terminus, the 148-residue chain is Large ribosomal subunit protein uL15 (148 aa).

The tract at residues 12 to 52 (ERKNRKRVGRGGGSGWGGTSGKGHKGQNARSGGGVPAWFEG) is disordered. The segment covering 21–32 (RGGGSGWGGTSG) has biased composition (gly residues).

Belongs to the universal ribosomal protein uL15 family. In terms of assembly, part of the 50S ribosomal subunit.

Functionally, binds to the 23S rRNA. This is Large ribosomal subunit protein uL15 from Maridesulfovibrio salexigens (strain ATCC 14822 / DSM 2638 / NCIMB 8403 / VKM B-1763) (Desulfovibrio salexigens).